A 728-amino-acid chain; its full sequence is Phosphoribosylformylglycinamidine synthase subunit PurL (728 aa).

H42 is an active-site residue. Residues Y45 and K84 each contribute to the ATP site. Position 86 (E86) interacts with Mg(2+). Residues 87 to 90 (SHNH) and R109 contribute to the substrate site. The Proton acceptor role is filled by H88. D110 contacts Mg(2+). Q237 contributes to the substrate binding site. D265 serves as a coordination point for Mg(2+). 309–311 (ESQ) provides a ligand contact to substrate. Residues D491 and G528 each coordinate ATP. N529 lines the Mg(2+) pocket. S531 provides a ligand contact to substrate.

It belongs to the FGAMS family. In terms of assembly, monomer. Part of the FGAM synthase complex composed of 1 PurL, 1 PurQ and 2 PurS subunits.

Its subcellular location is the cytoplasm. It carries out the reaction N(2)-formyl-N(1)-(5-phospho-beta-D-ribosyl)glycinamide + L-glutamine + ATP + H2O = 2-formamido-N(1)-(5-O-phospho-beta-D-ribosyl)acetamidine + L-glutamate + ADP + phosphate + H(+). It participates in purine metabolism; IMP biosynthesis via de novo pathway; 5-amino-1-(5-phospho-D-ribosyl)imidazole from N(2)-formyl-N(1)-(5-phospho-D-ribosyl)glycinamide: step 1/2. Its function is as follows. Part of the phosphoribosylformylglycinamidine synthase complex involved in the purines biosynthetic pathway. Catalyzes the ATP-dependent conversion of formylglycinamide ribonucleotide (FGAR) and glutamine to yield formylglycinamidine ribonucleotide (FGAM) and glutamate. The FGAM synthase complex is composed of three subunits. PurQ produces an ammonia molecule by converting glutamine to glutamate. PurL transfers the ammonia molecule to FGAR to form FGAM in an ATP-dependent manner. PurS interacts with PurQ and PurL and is thought to assist in the transfer of the ammonia molecule from PurQ to PurL. In Campylobacter jejuni (strain RM1221), this protein is Phosphoribosylformylglycinamidine synthase subunit PurL.